A 611-amino-acid chain; its full sequence is Adenosylhomocysteinase 3 (611 aa).

Composition is skewed to low complexity over residues 1–14 (MSVQ…AAKV), 36–57 (AAVG…APAA), and 68–81 (GPAA…GKVP). The interval 1 to 184 (MSVQVVSAAA…KQQKNSKGSS (184 aa)) is disordered. Ser2 is subject to N-acetylserine. The interval 2–109 (SVQVVSAAAA…DGGEALVSPD (108 aa)) is LISN domain, inhibits interaction with ITPR1. The residue at position 107 (Ser107) is a Phosphoserine. Positions 135-144 (RPTKIGRRSL) are enriched in basic residues. The segment covering 145-164 (SRSISQSSTDSYSSAASYTD) has biased composition (low complexity). A phosphoserine mark is found at Ser149, Ser152, Ser155, and Ser158. 3 residues coordinate substrate: Thr236, Asp310, and Glu335. 336 to 338 (SVT) is a binding site for NAD(+). Residues Lys365 and Asp369 each coordinate substrate. Residues Asn370, 401 to 406 (GEVGKG), Glu422, Asn457, 478 to 479 (MG), and Asn525 contribute to the NAD(+) site.

This sequence belongs to the adenosylhomocysteinase family. In terms of assembly, homotetramer. Forms heteromultimers with AHCYL1 (via the C-terminal region). Interacts with ITPR1; with lower affinity than AHCYL1 and maybe via ITPR1. Interacts with SLC4A4. Interacts with ZCCHC4. NAD(+) serves as cofactor. Phosphorylated during neuronal differentiation at the LISN domain.

It is found in the cytoplasm. It localises to the microsome. It catalyses the reaction S-adenosyl-L-homocysteine + H2O = L-homocysteine + adenosine. Its pathway is amino-acid biosynthesis; L-homocysteine biosynthesis; L-homocysteine from S-adenosyl-L-homocysteine: step 1/1. Functionally, may regulate the electrogenic sodium/bicarbonate cotransporter SLC4A4 activity and Mg(2+)-sensitivity. On the contrary of its homolog AHCYL1, does not regulate ITPR1 sensitivity to inositol 1,4,5-trisphosphate. The protein is Adenosylhomocysteinase 3 (AHCYL2) of Homo sapiens (Human).